A 325-amino-acid chain; its full sequence is GMP reductase (325 aa).

C173 functions as the Thioimidate intermediate in the catalytic mechanism. I202–V225 is a binding site for NADP(+).

This sequence belongs to the IMPDH/GMPR family. GuaC type 2 subfamily.

The catalysed reaction is IMP + NH4(+) + NADP(+) = GMP + NADPH + 2 H(+). Its function is as follows. Catalyzes the irreversible NADPH-dependent deamination of GMP to IMP. It functions in the conversion of nucleobase, nucleoside and nucleotide derivatives of G to A nucleotides, and in maintaining the intracellular balance of A and G nucleotides. This chain is GMP reductase, found in Variovorax paradoxus (strain S110).